The chain runs to 209 residues: Protein Sxy (209 aa).

Belongs to the Sxy/TfoX family.

Induces low levels of natural DNA uptake by inducing transcription of the competence genes (the CRP-S regulon) required for DNA transformation. Induction of the CRP-S regulon also requires Sxy-activated promoter (CRP-S), cAMP receptor protein (CRP) and cAMP. Induces CRP-S site-containing genes which are involved in genome maintenance and transcription or encoding transposases and toxin-antitoxin pairs. The protein is Protein Sxy of Escherichia coli (strain K12).